Consider the following 34-residue polypeptide: Photosystem II reaction center protein M (34 aa).

A helical membrane pass occupies residues 5-25; the sequence is ILAFIATALFILVPTAFLLII.

Belongs to the PsbM family. As to quaternary structure, PSII is composed of 1 copy each of membrane proteins PsbA, PsbB, PsbC, PsbD, PsbE, PsbF, PsbH, PsbI, PsbJ, PsbK, PsbL, PsbM, PsbT, PsbX, PsbY, PsbZ, Psb30/Ycf12, at least 3 peripheral proteins of the oxygen-evolving complex and a large number of cofactors. It forms dimeric complexes.

It is found in the plastid. The protein localises to the chloroplast thylakoid membrane. In terms of biological role, one of the components of the core complex of photosystem II (PSII). PSII is a light-driven water:plastoquinone oxidoreductase that uses light energy to abstract electrons from H(2)O, generating O(2) and a proton gradient subsequently used for ATP formation. It consists of a core antenna complex that captures photons, and an electron transfer chain that converts photonic excitation into a charge separation. This subunit is found at the monomer-monomer interface. The sequence is that of Photosystem II reaction center protein M from Cucumis sativus (Cucumber).